Here is a 68-residue protein sequence, read N- to C-terminus: ATP synthase F(0) complex subunit 8 (68 aa).

The chain crosses the membrane as a helical span at residues 8–24; sequence TWFTIIMAMLPTLYLIT. Residue Lys54 is modified to N6-acetyllysine; alternate. Lys54 is subject to N6-succinyllysine; alternate. Lys57 is subject to N6-acetyllysine.

Belongs to the ATPase protein 8 family. Component of the ATP synthase complex composed at least of ATP5F1A/subunit alpha, ATP5F1B/subunit beta, ATP5MC1/subunit c (homooctomer), MT-ATP6/subunit a, MT-ATP8/subunit 8, ATP5ME/subunit e, ATP5MF/subunit f, ATP5MG/subunit g, ATP5MK/subunit k, ATP5MJ/subunit j, ATP5F1C/subunit gamma, ATP5F1D/subunit delta, ATP5F1E/subunit epsilon, ATP5PF/subunit F6, ATP5PB/subunit b, ATP5PD/subunit d, ATP5PO/subunit OSCP. ATP synthase complex consists of a soluble F(1) head domain (subunits alpha(3) and beta(3)) - the catalytic core - and a membrane F(0) domain - the membrane proton channel (subunits c, a, 8, e, f, g, k and j). These two domains are linked by a central stalk (subunits gamma, delta, and epsilon) rotating inside the F1 region and a stationary peripheral stalk (subunits F6, b, d, and OSCP). Interacts with PRICKLE3.

Its subcellular location is the mitochondrion membrane. Its function is as follows. Subunit 8, of the mitochondrial membrane ATP synthase complex (F(1)F(0) ATP synthase or Complex V) that produces ATP from ADP in the presence of a proton gradient across the membrane which is generated by electron transport complexes of the respiratory chain. ATP synthase complex consist of a soluble F(1) head domain - the catalytic core - and a membrane F(1) domain - the membrane proton channel. These two domains are linked by a central stalk rotating inside the F(1) region and a stationary peripheral stalk. During catalysis, ATP synthesis in the catalytic domain of F(1) is coupled via a rotary mechanism of the central stalk subunits to proton translocation. In vivo, can only synthesize ATP although its ATP hydrolase activity can be activated artificially in vitro. Part of the complex F(0) domain. This chain is ATP synthase F(0) complex subunit 8, found in Papio hamadryas (Hamadryas baboon).